Consider the following 194-residue polypeptide: H-N-H endonuclease F-TflI (194 aa).

Functionally, endonuclease that cleaves only one strand of asymmetric DNA substrates thereby introducing interruptions into the template or coding strand. The polypeptide is H-N-H endonuclease F-TflI (Escherichia coli (Enterobacteria phage T5)).